The chain runs to 483 residues: 3-isopropylmalate dehydratase large subunit (483 aa).

Residues Cys-352, Cys-412, and Cys-415 each contribute to the [4Fe-4S] cluster site.

It belongs to the aconitase/IPM isomerase family. LeuC type 1 subfamily. In terms of assembly, heterodimer of LeuC and LeuD. Requires [4Fe-4S] cluster as cofactor.

The enzyme catalyses (2R,3S)-3-isopropylmalate = (2S)-2-isopropylmalate. It functions in the pathway amino-acid biosynthesis; L-leucine biosynthesis; L-leucine from 3-methyl-2-oxobutanoate: step 2/4. Its function is as follows. Catalyzes the isomerization between 2-isopropylmalate and 3-isopropylmalate, via the formation of 2-isopropylmaleate. This Paenarthrobacter aurescens (strain TC1) protein is 3-isopropylmalate dehydratase large subunit.